The chain runs to 147 residues: uncharacterized protein (147 aa).

The chain crosses the membrane as a helical span at residues Asn13 to Phe35.

It is found in the membrane. This is an uncharacterized protein from Saccharomyces cerevisiae (strain ATCC 204508 / S288c) (Baker's yeast).